The chain runs to 272 residues: Phosphate import ATP-binding protein PstB (272 aa).

The ABC transporter domain maps to 18–257 (VSMQNVTISY…FNDTQSIFNS (240 aa)). 50 to 57 (GPSGCGKS) provides a ligand contact to ATP.

It belongs to the ABC transporter superfamily. Phosphate importer (TC 3.A.1.7) family. In terms of assembly, the complex is composed of two ATP-binding proteins (PstB), two transmembrane proteins (PstC and PstA) and a solute-binding protein (PstS).

The protein localises to the cell inner membrane. It catalyses the reaction phosphate(out) + ATP + H2O = ADP + 2 phosphate(in) + H(+). In terms of biological role, part of the ABC transporter complex PstSACB involved in phosphate import. Responsible for energy coupling to the transport system. This chain is Phosphate import ATP-binding protein PstB, found in Synechococcus sp. (strain CC9902).